The following is a 92-amino-acid chain: Protease inhibitors (92 aa).

A signal peptide spans 1-19 (MKFALALCAAVLLVVLVQA). 2 consecutive Pacifastin domains span residues 20-54 (EEKC…CQPA) and 57-92 (EISC…CPNQ). 6 cysteine pairs are disulfide-bonded: C23–C38, C33–C51, C36–C46, C60–C75, C70–C89, and C73–C84. An O-linked (Fuc) threonine glycan is attached at T65.

The protein belongs to the protease inhibitor I19 family. As to expression, brain and fat body.

It localises to the secreted. Both LCMI I and II are inhibitors of chymotrypsin and elastase (in vitro). They both inhibit the prophenol oxidase activation cascade. The polypeptide is Protease inhibitors (Locusta migratoria (Migratory locust)).